A 309-amino-acid chain; its full sequence is Fe-S cluster assembly protein dre2 (309 aa).

The tract at residues 1–132 is N-terminal SAM-like domain; it reads MTTTIVLASP…LRRPAQVEAV (132 aa). The linker stretch occupies residues 133 to 195; sequence PLKLSTKKSA…DALVSDEETQ (63 aa). Residues C207, C216, C219, and C221 each coordinate [2Fe-2S] cluster. Residues 207-221 are fe-S binding site A; the sequence is CSKPGKKKRCKNCTC. [4Fe-4S] cluster is bound by residues C265, C268, C276, and C279. 2 short sequence motifs (cx2C motif) span residues 265–268 and 276–279; these read CGSC and CSGC. The fe-S binding site B stretch occupies residues 265 to 279; it reads CGSCYLGDAFRCSGC.

This sequence belongs to the anamorsin family. As to quaternary structure, monomer. Interacts with TAH18. Interacts with MIA40. The cofactor is [2Fe-2S] cluster. [4Fe-4S] cluster serves as cofactor.

It is found in the cytoplasm. Its subcellular location is the mitochondrion intermembrane space. Component of the cytosolic iron-sulfur (Fe-S) protein assembly (CIA) machinery required for the maturation of extramitochondrial Fe-S proteins. Part of an electron transfer chain functioning in an early step of cytosolic Fe-S biogenesis, facilitating the de novo assembly of a [4Fe-4S] cluster on the scaffold complex CFD1-NBP35. Electrons are transferred to DRE2 from NADPH via the FAD- and FMN-containing protein TAH18. TAH18-DRE2 are also required for the assembly of the diferric tyrosyl radical cofactor of ribonucleotide reductase (RNR), probably by providing electrons for reduction during radical cofactor maturation in the catalytic small subunit RNR2. In Schizosaccharomyces japonicus (strain yFS275 / FY16936) (Fission yeast), this protein is Fe-S cluster assembly protein dre2.